The following is a 904-amino-acid chain: E3 ubiquitin-protein ligase HACE1 (904 aa).

7 ANK repeats span residues 34 to 63, 68 to 97, 101 to 130, 134 to 163, 167 to 196, 200 to 230, and 232 to 261; these read AVYT…DVNY, VKRS…NPNY, SGCT…DVNI, EGLT…NVDV, MGQT…DINR, SGAT…YLPD, and NGVT…RLFQ. Residues 569 to 904 form the HECT domain; sequence SNEKLKQGIA…HCGSYGYTMA (336 aa). The active-site Glycyl thioester intermediate is the Cys-871.

The protein localises to the golgi apparatus. It localises to the golgi stack membrane. Its subcellular location is the cytoplasm. It is found in the endoplasmic reticulum. It catalyses the reaction S-ubiquitinyl-[E2 ubiquitin-conjugating enzyme]-L-cysteine + [acceptor protein]-L-lysine = [E2 ubiquitin-conjugating enzyme]-L-cysteine + N(6)-ubiquitinyl-[acceptor protein]-L-lysine.. The protein operates within protein modification; protein ubiquitination. E3 ubiquitin-protein ligase involved in Golgi membrane fusion and regulation of small GTPases. Acts as a regulator of Golgi membrane dynamics during the cell cycle: recruited to Golgi membrane by Rab proteins and regulates postmitotic Golgi membrane fusion. Acts by mediating ubiquitination during mitotic Golgi disassembly, ubiquitination serving as a signal for Golgi reassembly later, after cell division. The polypeptide is E3 ubiquitin-protein ligase HACE1 (hace1) (Danio rerio (Zebrafish)).